The sequence spans 284 residues: Pantothenate synthetase (284 aa).

Residue methionine 30–histidine 37 coordinates ATP. The active-site Proton donor is histidine 37. Residue glutamine 61 participates in (R)-pantoate binding. Glutamine 61 is a beta-alanine binding site. Position 149–152 (glycine 149–aspartate 152) interacts with ATP. (R)-pantoate is bound at residue glutamine 155. ATP contacts are provided by residues valine 178 and leucine 186–arginine 189.

Belongs to the pantothenate synthetase family. Homodimer.

It localises to the cytoplasm. It carries out the reaction (R)-pantoate + beta-alanine + ATP = (R)-pantothenate + AMP + diphosphate + H(+). It participates in cofactor biosynthesis; (R)-pantothenate biosynthesis; (R)-pantothenate from (R)-pantoate and beta-alanine: step 1/1. Its function is as follows. Catalyzes the condensation of pantoate with beta-alanine in an ATP-dependent reaction via a pantoyl-adenylate intermediate. The chain is Pantothenate synthetase from Yersinia enterocolitica serotype O:8 / biotype 1B (strain NCTC 13174 / 8081).